Consider the following 68-residue polypeptide: U-poneritoxin(01)-Om4a (68 aa).

The signal sequence occupies residues 1–25 (MKPSSLTLAFLVVFMMAIMYNSVQA). Positions 26 to 39 (EALADADAEAFAEA) are excised as a propeptide.

Belongs to the formicidae venom precursor-01 superfamily. Homo- or heterodimer with PLP7 (AC A0A348G6I9); disulfide-linked. Truncated sequences of this peptide have also been found in the venom. It is possible they have been cleaved in the venom. As to expression, expressed by the venom gland.

It localises to the secreted. This homodimer composed of two cationic amphipathic alpha-helical peptides has antimicrobial activities against E.coli (MIC=3.1 uM), S.aureus (MIC=3.1 uM), and S.cerevisiae (MIC=3.1 uM). It also shows histamine-releasing activity (66.4% at 10 uM) and a weak hemolytic activity (10.5% at 50 uM). This Odontomachus monticola (Trap-jaw ant) protein is U-poneritoxin(01)-Om4a.